Reading from the N-terminus, the 388-residue chain is Succinate--CoA ligase [ADP-forming] subunit beta (388 aa).

Residues 9 to 244 (KQLFAEYGLP…PSQDDPREAH (236 aa)) enclose the ATP-grasp domain. ATP is bound by residues Lys46, 53–55 (GRG), Glu99, Thr102, and Glu107. Mg(2+)-binding residues include Asn199 and Asp213. Substrate contacts are provided by residues Asn264 and 321–323 (GIV).

This sequence belongs to the succinate/malate CoA ligase beta subunit family. As to quaternary structure, heterotetramer of two alpha and two beta subunits. Mg(2+) serves as cofactor.

It carries out the reaction succinate + ATP + CoA = succinyl-CoA + ADP + phosphate. The enzyme catalyses GTP + succinate + CoA = succinyl-CoA + GDP + phosphate. The protein operates within carbohydrate metabolism; tricarboxylic acid cycle; succinate from succinyl-CoA (ligase route): step 1/1. Succinyl-CoA synthetase functions in the citric acid cycle (TCA), coupling the hydrolysis of succinyl-CoA to the synthesis of either ATP or GTP and thus represents the only step of substrate-level phosphorylation in the TCA. The beta subunit provides nucleotide specificity of the enzyme and binds the substrate succinate, while the binding sites for coenzyme A and phosphate are found in the alpha subunit. The protein is Succinate--CoA ligase [ADP-forming] subunit beta of Pseudomonas syringae pv. tomato (strain ATCC BAA-871 / DC3000).